Here is a 373-residue protein sequence, read N- to C-terminus: tRNA-specific 2-thiouridylase MnmA (373 aa).

ATP-binding positions include 12–19 (GMSGGVDS) and Met-38. Residues 98–100 (NPD) are interaction with target base in tRNA. Catalysis depends on Cys-103, which acts as the Nucleophile. Cys-103 and Cys-200 form a disulfide bridge. Gly-127 contributes to the ATP binding site. Residues 150–152 (KDQ) are interaction with tRNA. The active-site Cysteine persulfide intermediate is the Cys-200. The segment at 312–313 (RY) is interaction with tRNA.

Belongs to the MnmA/TRMU family.

The protein localises to the cytoplasm. It catalyses the reaction S-sulfanyl-L-cysteinyl-[protein] + uridine(34) in tRNA + AH2 + ATP = 2-thiouridine(34) in tRNA + L-cysteinyl-[protein] + A + AMP + diphosphate + H(+). Catalyzes the 2-thiolation of uridine at the wobble position (U34) of tRNA, leading to the formation of s(2)U34. This is tRNA-specific 2-thiouridylase MnmA from Streptococcus uberis (strain ATCC BAA-854 / 0140J).